Consider the following 296-residue polypeptide: 2-haloacid dehalogenase, configuration-inverting (296 aa).

It belongs to the HAD-like hydrolase superfamily. S-2-haloalkanoic acid dehalogenase family.

It carries out the reaction an (S)-2-haloacid + H2O = a (2R)-2-hydroxycarboxylate + a halide anion + H(+). It catalyses the reaction an (R)-2-haloacid + H2O = a (2S)-2-hydroxycarboxylate + a halide anion + H(+). Dehalogenates both (S)- and (R)-2-haloalkanoic acids to the corresponding (R)- and (S)-hydroxyalkanoic acids, respectively, with inversion of configuration at C-2. Acts on 2-haloalkanoic acids whose carbon chain lengths are five or less. This Alcaligenes xylosoxydans xylosoxydans (Achromobacter xylosoxidans) protein is 2-haloacid dehalogenase, configuration-inverting (dhlC).